A 350-amino-acid polypeptide reads, in one-letter code: N-acetyl-gamma-glutamyl-phosphate reductase (350 aa).

Cys-153 is an active-site residue.

Belongs to the NAGSA dehydrogenase family. Type 1 subfamily.

The protein localises to the cytoplasm. The enzyme catalyses N-acetyl-L-glutamate 5-semialdehyde + phosphate + NADP(+) = N-acetyl-L-glutamyl 5-phosphate + NADPH + H(+). Its pathway is amino-acid biosynthesis; L-arginine biosynthesis; N(2)-acetyl-L-ornithine from L-glutamate: step 3/4. Functionally, catalyzes the NADPH-dependent reduction of N-acetyl-5-glutamyl phosphate to yield N-acetyl-L-glutamate 5-semialdehyde. In Gloeobacter violaceus (strain ATCC 29082 / PCC 7421), this protein is N-acetyl-gamma-glutamyl-phosphate reductase.